A 333-amino-acid chain; its full sequence is Ketol-acid reductoisomerase (NADP(+)) (333 aa).

Positions 2-182 (AELFYDDDAD…GGTRAGVIKT (181 aa)) constitute a KARI N-terminal Rossmann domain. Residues 25–28 (YGSQ), Ser51, Ser53, and 83–86 (DPIQ) contribute to the NADP(+) site. Residue His108 is part of the active site. Gly134 is a binding site for NADP(+). One can recognise a KARI C-terminal knotted domain in the interval 183–328 (TFTEETETDL…RELRKLMSWV (146 aa)). Positions 191, 195, 227, and 231 each coordinate Mg(2+). Ser252 lines the substrate pocket.

It belongs to the ketol-acid reductoisomerase family. The cofactor is Mg(2+).

It catalyses the reaction (2R)-2,3-dihydroxy-3-methylbutanoate + NADP(+) = (2S)-2-acetolactate + NADPH + H(+). The catalysed reaction is (2R,3R)-2,3-dihydroxy-3-methylpentanoate + NADP(+) = (S)-2-ethyl-2-hydroxy-3-oxobutanoate + NADPH + H(+). It functions in the pathway amino-acid biosynthesis; L-isoleucine biosynthesis; L-isoleucine from 2-oxobutanoate: step 2/4. It participates in amino-acid biosynthesis; L-valine biosynthesis; L-valine from pyruvate: step 2/4. Involved in the biosynthesis of branched-chain amino acids (BCAA). Catalyzes an alkyl-migration followed by a ketol-acid reduction of (S)-2-acetolactate (S2AL) to yield (R)-2,3-dihydroxy-isovalerate. In the isomerase reaction, S2AL is rearranged via a Mg-dependent methyl migration to produce 3-hydroxy-3-methyl-2-ketobutyrate (HMKB). In the reductase reaction, this 2-ketoacid undergoes a metal-dependent reduction by NADPH to yield (R)-2,3-dihydroxy-isovalerate. The polypeptide is Ketol-acid reductoisomerase (NADP(+)) (Streptomyces griseus subsp. griseus (strain JCM 4626 / CBS 651.72 / NBRC 13350 / KCC S-0626 / ISP 5235)).